A 2897-amino-acid chain; its full sequence is Chromodomain-helicase-DNA-binding protein 9 (2897 aa).

Polar residues predominate over residues 173–201; it reads QCTSLRSQQNRNNLNPGQNSLSQSKNFMN. 3 disordered regions span residues 173–265, 482–525, and 537–671; these read QCTS…CSVS, QRQP…KQEK, and AKER…SAPL. Residue Lys-197 forms a Glycyl lysine isopeptide (Lys-Gly) (interchain with G-Cter in SUMO2) linkage. Positions 220-235 are enriched in low complexity; it reads SNSQQSISMQQFSQTS. Composition is skewed to polar residues over residues 247 to 260 and 484 to 506; these read HQEGNFNGPSPNMT and QPPSSKKSDGSGTYTKLQNTQVR. The residue at position 499 (Lys-499) is an N6-acetyllysine. Residues 508-525 are compositionally biased toward basic and acidic residues; the sequence is MSEKKQRKKVESESKQEK. Ser-550 carries the phosphoserine modification. The segment covering 573–593 has biased composition (basic and acidic residues); that stretch reads KPKDKDSKKTKTCSKLKEKTK. A Glycyl lysine isopeptide (Lys-Gly) (interchain with G-Cter in SUMO2) cross-link involves residue Lys-596. The residue at position 611 (Ser-611) is a Phosphoserine. Residues 634–644 show a composition bias toward basic residues; that stretch reads RRSNRQIKRKK. A compositionally biased stretch (basic and acidic residues) spans 645-660; sequence YAEDIEGKQSEEEVKG. Chromo domains follow at residues 690 to 761 and 773 to 839; these read AIVD…HFFA and VEVD…RLDR. An LXXLL motif 1 motif is present at residues 868 to 872; it reads LNWLL. The Helicase ATP-binding domain maps to 872–1046; sequence LFNWYNRRNC…FSLLHFLEPL (175 aa). 885-892 lines the ATP pocket; it reads DEMGLGKT. The DEAH box signature appears at 997–1000; sequence DEAH. The LXXLL motif 2 motif lies at 1036–1040; it reads LFSLL. Residues 1186-1337 form the Helicase C-terminal domain; the sequence is LIDKLLPKMK…KAVLQSMSGR (152 aa). Residues 1461–1484 are disordered; that stretch reads KDELAELSEAESEGDEKPKLRRPC. Residues 1465-1474 show a composition bias toward acidic residues; sequence AELSEAESEG. Phosphoserine is present on residues Ser-1468 and Ser-1472. Residues 1475-1484 show a composition bias toward basic and acidic residues; it reads DEKPKLRRPC. Glycyl lysine isopeptide (Lys-Gly) (interchain with G-Cter in SUMO2) cross-links involve residues Lys-1588, Lys-1738, and Lys-1903. Ser-2026 is modified (phosphoserine). The short motif at 2031–2035 is the LXXLL motif 3 element; the sequence is LPRLL. Lys-2038 participates in a covalent cross-link: Glycyl lysine isopeptide (Lys-Gly) (interchain with G-Cter in SUMO2). Disordered regions lie at residues 2050 to 2238 and 2305 to 2337; these read ENLK…QMNN and GAATEYSDPSVPTPPGAGVKEEHDQSTQMSKVK. Phosphoserine is present on residues Ser-2058 and Ser-2059. Lys-2074 is covalently cross-linked (Glycyl lysine isopeptide (Lys-Gly) (interchain with G-Cter in SUMO2)). Residues Ser-2075 and Ser-2079 each carry the phosphoserine modification. Residues 2094–2104 are compositionally biased toward basic and acidic residues; it reads SGGKCETDRRM. Over residues 2141-2193 the composition is skewed to low complexity; that stretch reads SSCSSRSSSSSSSSSCSHSRSGSSSSSSSSCSSASSSSSSSTSSSSSSSSSSS. Positions 2203 to 2216 are enriched in basic and acidic residues; the sequence is AQKRESTTHMKAYD. A compositionally biased stretch (polar residues) spans 2221–2238; the sequence is ASLSTTQDETQDSFQMNN. The interval 2332 to 2481 is binds A/T-rich DNA; it reads QMSKVKKHVR…LSYTQPQGIP (150 aa). Glycyl lysine isopeptide (Lys-Gly) (interchain with G-Cter in SUMO2) cross-links involve residues Lys-2350, Lys-2356, and Lys-2361. The segment at 2429 to 2436 is a.T hook-like; the sequence is KKRRGRRK. The short motif at 2721–2725 is the LXXLL motif 4 element; the sequence is LPNLL. Residues 2729-2777 form a disordered region; that stretch reads GLLTKPTESGTEDKKGSDSKESEGKTERTESQSSENGGENSVSSSPSTS. Over residues 2739–2758 the composition is skewed to basic and acidic residues; sequence TEDKKGSDSKESEGKTERTE. Positions 2759 to 2777 are enriched in low complexity; the sequence is SQSSENGGENSVSSSPSTS. Positions 2793–2797 match the LXXLL motif 5 motif; it reads LNPLL. The tract at residues 2827-2897 is disordered; the sequence is VQNKNSDLGS…SEDSDSSNED (71 aa). Residues 2840 to 2857 show a composition bias toward basic and acidic residues; sequence VEVKEEDSRIKDQEDKGG. Lys-2843 is covalently cross-linked (Glycyl lysine isopeptide (Lys-Gly) (interchain with G-Cter in SUMO2)). Over residues 2877–2888 the composition is skewed to low complexity; sequence ASSGSDSTSSSS.

Belongs to the SNF2/RAD54 helicase family. As to quaternary structure, interacts with PPARA. Probably interacts with ESR1 and NR1I3. Phosphorylated on serine and tyrosine residues. In terms of tissue distribution, widely expressed at low levels. In bone marrow, expression is restricted to osteoprogenitor cells adjacent to mature osteoblasts.

The protein resides in the cytoplasm. It is found in the nucleus. The catalysed reaction is ATP + H2O = ADP + phosphate + H(+). Functionally, probable ATP-dependent chromatin-remodeling factor. Acts as a transcriptional coactivator for PPARA and possibly other nuclear receptors. Has DNA-dependent ATPase activity and binds to A/T-rich DNA. Associates with A/T-rich regulatory regions in promoters of genes that participate in the differentiation of progenitors during osteogenesis. This Homo sapiens (Human) protein is Chromodomain-helicase-DNA-binding protein 9 (CHD9).